An 89-amino-acid polypeptide reads, in one-letter code: Small ribosomal subunit protein uS15 (89 aa).

The protein belongs to the universal ribosomal protein uS15 family. As to quaternary structure, part of the 30S ribosomal subunit. Forms a bridge to the 50S subunit in the 70S ribosome, contacting the 23S rRNA.

Functionally, one of the primary rRNA binding proteins, it binds directly to 16S rRNA where it helps nucleate assembly of the platform of the 30S subunit by binding and bridging several RNA helices of the 16S rRNA. Its function is as follows. Forms an intersubunit bridge (bridge B4) with the 23S rRNA of the 50S subunit in the ribosome. This chain is Small ribosomal subunit protein uS15, found in Buchnera aphidicola subsp. Cinara cedri (strain Cc).